An 858-amino-acid polypeptide reads, in one-letter code: Phosphoenolpyruvate carboxylase (858 aa).

Catalysis depends on residues histidine 145 and lysine 531.

It belongs to the PEPCase type 1 family. It depends on Mg(2+) as a cofactor.

The enzyme catalyses oxaloacetate + phosphate = phosphoenolpyruvate + hydrogencarbonate. In terms of biological role, forms oxaloacetate, a four-carbon dicarboxylic acid source for the tricarboxylic acid cycle. The sequence is that of Phosphoenolpyruvate carboxylase from Thermus thermophilus (strain ATCC BAA-163 / DSM 7039 / HB27).